The primary structure comprises 191 residues: Glutathione-dependent formaldehyde-activating enzyme (191 aa).

Residues 22–169 (FAGGTLQCLC…LTELGLTPYD (148 aa)) enclose the CENP-V/GFA domain. Zn(2+) is bound by residues Cys-29, Cys-31, Cys-50, Cys-52, Cys-55, Cys-97, and Cys-100.

It belongs to the Gfa family. Zn(2+) serves as cofactor.

The catalysed reaction is S-(hydroxymethyl)glutathione = glutathione + formaldehyde. It participates in one-carbon metabolism; formaldehyde degradation; formate from formaldehyde (glutathione route): step 1/3. Its function is as follows. Catalyzes the condensation of formaldehyde and glutathione to S-hydroxymethylglutathione. This Xanthomonas campestris pv. campestris (strain B100) protein is Glutathione-dependent formaldehyde-activating enzyme.